The following is a 260-amino-acid chain: Dehydrogenase/reductase SDR family member 4 (260 aa).

NADP(+) is bound at residue 14-38; it reads IVTAATKGIGLAIAERLLDEGASVV. Residue Ser-148 participates in substrate binding. The active-site Proton acceptor is Tyr-161. Lys-165 serves as a coordination point for NADP(+).

Belongs to the short-chain dehydrogenases/reductases (SDR) family.

The catalysed reaction is a secondary alcohol + NADP(+) = a ketone + NADPH + H(+). Its function is as follows. Catalyzes the reduction of isatin, 4-oxonon-2-enal, 9,10-phenanthrenequinone, menadione, 2,3-hexaenadione, 3,4-hexanedione and 2,3-heptanedione. This Caenorhabditis elegans protein is Dehydrogenase/reductase SDR family member 4.